A 223-amino-acid chain; its full sequence is Deoxyribose-phosphate aldolase 1 (223 aa).

The active-site Proton donor/acceptor is Asp91. The active-site Schiff-base intermediate with acetaldehyde is the Lys153. The active-site Proton donor/acceptor is Lys182.

It belongs to the DeoC/FbaB aldolase family. DeoC type 1 subfamily.

It is found in the cytoplasm. The catalysed reaction is 2-deoxy-D-ribose 5-phosphate = D-glyceraldehyde 3-phosphate + acetaldehyde. It participates in carbohydrate degradation; 2-deoxy-D-ribose 1-phosphate degradation; D-glyceraldehyde 3-phosphate and acetaldehyde from 2-deoxy-alpha-D-ribose 1-phosphate: step 2/2. Its function is as follows. Catalyzes a reversible aldol reaction between acetaldehyde and D-glyceraldehyde 3-phosphate to generate 2-deoxy-D-ribose 5-phosphate. This is Deoxyribose-phosphate aldolase 1 from Yersinia pestis.